A 34-amino-acid polypeptide reads, in one-letter code: MVEPLLSGIVLGLVPVTLAGLFVTAYLQYRRGDV.

Residues 5-25 (LLSGIVLGLVPVTLAGLFVTA) traverse the membrane as a helical segment.

It belongs to the PetG family. As to quaternary structure, the 4 large subunits of the cytochrome b6-f complex are cytochrome b6, subunit IV (17 kDa polypeptide, PetD), cytochrome f and the Rieske protein, while the 4 small subunits are PetG, PetL, PetM and PetN. The complex functions as a dimer.

It localises to the plastid. Its subcellular location is the chloroplast thylakoid membrane. Its function is as follows. Component of the cytochrome b6-f complex, which mediates electron transfer between photosystem II (PSII) and photosystem I (PSI), cyclic electron flow around PSI, and state transitions. PetG is required for either the stability or assembly of the cytochrome b6-f complex. This chain is Cytochrome b6-f complex subunit 5, found in Oltmannsiellopsis viridis (Marine flagellate).